Here is a 314-residue protein sequence, read N- to C-terminus: Malate dehydrogenase (314 aa).

NAD(+) is bound by residues 11-16 and aspartate 35; that span reads GSGNIG. Residues arginine 84 and arginine 90 each contribute to the substrate site. NAD(+) is bound by residues asparagine 97 and 120-122; that span reads ITN. The substrate site is built by asparagine 122 and arginine 153. The active-site Proton acceptor is the histidine 177.

This sequence belongs to the LDH/MDH superfamily. MDH type 3 family.

It catalyses the reaction (S)-malate + NAD(+) = oxaloacetate + NADH + H(+). In terms of biological role, catalyzes the reversible oxidation of malate to oxaloacetate. The polypeptide is Malate dehydrogenase (Rickettsia africae (strain ESF-5)).